The sequence spans 150 residues: Small ribosomal subunit protein uS11 (150 aa).

Belongs to the universal ribosomal protein uS11 family. Part of the 30S ribosomal subunit. Interacts with proteins S7 and S18. Binds to IF-3.

Located on the platform of the 30S subunit, it bridges several disparate RNA helices of the 16S rRNA. Forms part of the Shine-Dalgarno cleft in the 70S ribosome. This is Small ribosomal subunit protein uS11 from Pelagibacter ubique (strain HTCC1062).